We begin with the raw amino-acid sequence, 375 residues long: DNA replication and repair protein RecF (375 aa).

30 to 37 (GENAQGKT) is a binding site for ATP.

This sequence belongs to the RecF family.

It is found in the cytoplasm. Functionally, the RecF protein is involved in DNA metabolism; it is required for DNA replication and normal SOS inducibility. RecF binds preferentially to single-stranded, linear DNA. It also seems to bind ATP. In Bacillus cereus (strain ZK / E33L), this protein is DNA replication and repair protein RecF.